A 527-amino-acid chain; its full sequence is Peptide chain release factor 3 (527 aa).

The tr-type G domain maps to 9 to 277 (AKRRTFAIIS…AVVDWAPRPL (269 aa)). GTP is bound by residues 18–25 (SHPDAGKT), 86–90 (DTPGH), and 140–143 (NKLD).

The protein belongs to the TRAFAC class translation factor GTPase superfamily. Classic translation factor GTPase family. PrfC subfamily.

It is found in the cytoplasm. Increases the formation of ribosomal termination complexes and stimulates activities of RF-1 and RF-2. It binds guanine nucleotides and has strong preference for UGA stop codons. It may interact directly with the ribosome. The stimulation of RF-1 and RF-2 is significantly reduced by GTP and GDP, but not by GMP. This Ectopseudomonas mendocina (strain ymp) (Pseudomonas mendocina) protein is Peptide chain release factor 3.